We begin with the raw amino-acid sequence, 500 residues long: Probable cytosol aminopeptidase (500 aa).

Residues Lys274 and Asp279 each coordinate Mn(2+). The active site involves Lys286. Residues Asp297, Asp356, and Glu358 each contribute to the Mn(2+) site. The active site involves Arg360.

This sequence belongs to the peptidase M17 family. Mn(2+) is required as a cofactor.

Its subcellular location is the cytoplasm. It catalyses the reaction Release of an N-terminal amino acid, Xaa-|-Yaa-, in which Xaa is preferably Leu, but may be other amino acids including Pro although not Arg or Lys, and Yaa may be Pro. Amino acid amides and methyl esters are also readily hydrolyzed, but rates on arylamides are exceedingly low.. The enzyme catalyses Release of an N-terminal amino acid, preferentially leucine, but not glutamic or aspartic acids.. Functionally, presumably involved in the processing and regular turnover of intracellular proteins. Catalyzes the removal of unsubstituted N-terminal amino acids from various peptides. The polypeptide is Probable cytosol aminopeptidase (Saccharophagus degradans (strain 2-40 / ATCC 43961 / DSM 17024)).